The primary structure comprises 429 residues: Gamma-glutamyl phosphate reductase (429 aa).

Belongs to the gamma-glutamyl phosphate reductase family.

Its subcellular location is the cytoplasm. It catalyses the reaction L-glutamate 5-semialdehyde + phosphate + NADP(+) = L-glutamyl 5-phosphate + NADPH + H(+). It functions in the pathway amino-acid biosynthesis; L-proline biosynthesis; L-glutamate 5-semialdehyde from L-glutamate: step 2/2. Catalyzes the NADPH-dependent reduction of L-glutamate 5-phosphate into L-glutamate 5-semialdehyde and phosphate. The product spontaneously undergoes cyclization to form 1-pyrroline-5-carboxylate. This chain is Gamma-glutamyl phosphate reductase, found in Bradyrhizobium sp. (strain BTAi1 / ATCC BAA-1182).